Reading from the N-terminus, the 438-residue chain is Methylenetetrahydrofolate--tRNA-(uracil-5-)-methyltransferase TrmFO (438 aa).

10–15 (GGGLAG) is a binding site for FAD.

Belongs to the MnmG family. TrmFO subfamily. The cofactor is FAD.

The protein resides in the cytoplasm. It catalyses the reaction uridine(54) in tRNA + (6R)-5,10-methylene-5,6,7,8-tetrahydrofolate + NADH + H(+) = 5-methyluridine(54) in tRNA + (6S)-5,6,7,8-tetrahydrofolate + NAD(+). It carries out the reaction uridine(54) in tRNA + (6R)-5,10-methylene-5,6,7,8-tetrahydrofolate + NADPH + H(+) = 5-methyluridine(54) in tRNA + (6S)-5,6,7,8-tetrahydrofolate + NADP(+). Its function is as follows. Catalyzes the folate-dependent formation of 5-methyl-uridine at position 54 (M-5-U54) in all tRNAs. The chain is Methylenetetrahydrofolate--tRNA-(uracil-5-)-methyltransferase TrmFO from Trichormus variabilis (strain ATCC 29413 / PCC 7937) (Anabaena variabilis).